The following is a 353-amino-acid chain: RNA 3'-terminal phosphate cyclase (353 aa).

Residues glutamine 100 and 285–289 (HAADQ) contribute to the ATP site. Catalysis depends on histidine 311, which acts as the Tele-AMP-histidine intermediate.

The protein belongs to the RNA 3'-terminal cyclase family. Type 1 subfamily.

It is found in the cytoplasm. It catalyses the reaction a 3'-end 3'-phospho-ribonucleotide-RNA + ATP = a 3'-end 2',3'-cyclophospho-ribonucleotide-RNA + AMP + diphosphate. Its function is as follows. Catalyzes the conversion of 3'-phosphate to a 2',3'-cyclic phosphodiester at the end of RNA. The mechanism of action of the enzyme occurs in 3 steps: (A) adenylation of the enzyme by ATP; (B) transfer of adenylate to an RNA-N3'P to produce RNA-N3'PP5'A; (C) and attack of the adjacent 2'-hydroxyl on the 3'-phosphorus in the diester linkage to produce the cyclic end product. The biological role of this enzyme is unknown but it is likely to function in some aspects of cellular RNA processing. In Nitrosospira multiformis (strain ATCC 25196 / NCIMB 11849 / C 71), this protein is RNA 3'-terminal phosphate cyclase.